A 101-amino-acid polypeptide reads, in one-letter code: ATP-dependent Clp protease adapter protein ClpS (101 aa).

It belongs to the ClpS family. Binds to the N-terminal domain of the chaperone ClpA.

Involved in the modulation of the specificity of the ClpAP-mediated ATP-dependent protein degradation. In Corynebacterium efficiens (strain DSM 44549 / YS-314 / AJ 12310 / JCM 11189 / NBRC 100395), this protein is ATP-dependent Clp protease adapter protein ClpS.